Reading from the N-terminus, the 156-residue chain is Arginine repressor (156 aa).

The protein belongs to the ArgR family.

It is found in the cytoplasm. The protein operates within amino-acid biosynthesis; L-arginine biosynthesis [regulation]. Its function is as follows. Regulates arginine biosynthesis genes. The sequence is that of Arginine repressor from Citrobacter koseri (strain ATCC BAA-895 / CDC 4225-83 / SGSC4696).